A 755-amino-acid polypeptide reads, in one-letter code: Tryptophan 2-monooxygenase (755 aa).

4 residues coordinate FMN: serine 247, glutamate 267, lysine 275, and arginine 295. Arginine 295 is a binding site for substrate.

It belongs to the tryptophan 2-monooxygenase family. It depends on FMN as a cofactor.

The catalysed reaction is L-tryptophan + O2 = indole-3-acetamide + CO2 + H2O. Its pathway is plant hormone metabolism; auxin biosynthesis. The protein is Tryptophan 2-monooxygenase (tms1) of Agrobacterium tumefaciens (strain Ach5).